The sequence spans 192 residues: Putative 3-methyladenine DNA glycosylase (192 aa).

It belongs to the DNA glycosylase MPG family.

The protein is Putative 3-methyladenine DNA glycosylase of Bdellovibrio bacteriovorus (strain ATCC 15356 / DSM 50701 / NCIMB 9529 / HD100).